Reading from the N-terminus, the 338-residue chain is N-acetyl-gamma-glutamyl-phosphate reductase (338 aa).

The active site involves Cys-148.

The protein belongs to the NAGSA dehydrogenase family. Type 1 subfamily.

The protein localises to the cytoplasm. It carries out the reaction N-acetyl-L-glutamate 5-semialdehyde + phosphate + NADP(+) = N-acetyl-L-glutamyl 5-phosphate + NADPH + H(+). The protein operates within amino-acid biosynthesis; L-arginine biosynthesis; N(2)-acetyl-L-ornithine from L-glutamate: step 3/4. Its function is as follows. Catalyzes the NADPH-dependent reduction of N-acetyl-5-glutamyl phosphate to yield N-acetyl-L-glutamate 5-semialdehyde. The polypeptide is N-acetyl-gamma-glutamyl-phosphate reductase (Leptospira interrogans serogroup Icterohaemorrhagiae serovar Lai (strain 56601)).